We begin with the raw amino-acid sequence, 387 residues long: 3-ketoacyl-CoA thiolase (387 aa).

Cys91 functions as the Acyl-thioester intermediate in the catalytic mechanism. Catalysis depends on proton acceptor residues His343 and Cys373.

The protein belongs to the thiolase-like superfamily. Thiolase family. As to quaternary structure, heterotetramer of two alpha chains (FadB) and two beta chains (FadA).

The protein resides in the cytoplasm. The catalysed reaction is an acyl-CoA + acetyl-CoA = a 3-oxoacyl-CoA + CoA. It participates in lipid metabolism; fatty acid beta-oxidation. Functionally, catalyzes the final step of fatty acid oxidation in which acetyl-CoA is released and the CoA ester of a fatty acid two carbons shorter is formed. This chain is 3-ketoacyl-CoA thiolase, found in Pectobacterium carotovorum subsp. carotovorum (strain PC1).